The following is a 92-amino-acid chain: Beta-2-microglobulin (92 aa).

The Ig-like C1-type domain maps to 2–91 (PQIQVYTRHP…VSLNEPKTVI (90 aa)). Cys22 and Cys77 are disulfide-bonded.

This sequence belongs to the beta-2-microglobulin family. Heterodimer of an alpha chain and a beta chain. Beta-2-microglobulin is the beta-chain of major histocompatibility complex class I molecules.

The protein localises to the secreted. Component of the class I major histocompatibility complex (MHC). Involved in the presentation of peptide antigens to the immune system. This is Beta-2-microglobulin (B2m) from Mus cervicolor (Fawn-colored mouse).